An 86-amino-acid chain; its full sequence is UPF0437 protein Ava_4254 (86 aa).

The protein belongs to the UPF0437 family.

This is UPF0437 protein Ava_4254 from Trichormus variabilis (strain ATCC 29413 / PCC 7937) (Anabaena variabilis).